Here is a 61-residue protein sequence, read N- to C-terminus: LECHNQQSSQTPTTQTCPGETNCYKKQWSDHRGSRTERGCGCPTVKPGIKLKCCTTDRCNK.

4 disulfide bridges follow: Cys-3-Cys-23, Cys-17-Cys-40, Cys-42-Cys-53, and Cys-54-Cys-59.

This sequence belongs to the three-finger toxin family. Short-chain subfamily. Type I alpha-neurotoxin sub-subfamily. As to expression, expressed by the venom gland.

It localises to the secreted. Binds to muscle nicotinic acetylcholine receptor (nAChR) and inhibit acetylcholine from binding to the receptor, thereby impairing neuromuscular transmission. The chain is Short neurotoxin 2 from Hemachatus haemachatus (Rinkhals).